A 258-amino-acid chain; its full sequence is UPF0246 protein VV1_0535 (258 aa).

This sequence belongs to the UPF0246 family.

The sequence is that of UPF0246 protein VV1_0535 from Vibrio vulnificus (strain CMCP6).